The chain runs to 207 residues: Ribosomal RNA small subunit methyltransferase G (207 aa).

S-adenosyl-L-methionine contacts are provided by residues Gly-73, Leu-78, 124–125, and Arg-139; that span reads VE.

It belongs to the methyltransferase superfamily. RNA methyltransferase RsmG family.

It localises to the cytoplasm. The enzyme catalyses guanosine(527) in 16S rRNA + S-adenosyl-L-methionine = N(7)-methylguanosine(527) in 16S rRNA + S-adenosyl-L-homocysteine. In terms of biological role, specifically methylates the N7 position of guanine in position 527 of 16S rRNA. In Klebsiella pneumoniae subsp. pneumoniae (strain ATCC 700721 / MGH 78578), this protein is Ribosomal RNA small subunit methyltransferase G.